The following is a 172-amino-acid chain: Cytidylate kinase (172 aa).

Residue G7–T15 coordinates ATP.

This sequence belongs to the cytidylate kinase family. Type 2 subfamily.

Its subcellular location is the cytoplasm. It carries out the reaction CMP + ATP = CDP + ADP. It catalyses the reaction dCMP + ATP = dCDP + ADP. The sequence is that of Cytidylate kinase from Methanobrevibacter smithii (strain ATCC 35061 / DSM 861 / OCM 144 / PS).